A 411-amino-acid polypeptide reads, in one-letter code: Multifunctional CCA protein (411 aa).

Positions 8 and 11 each coordinate ATP. Residues Gly8 and Arg11 each coordinate CTP. Positions 21 and 23 each coordinate Mg(2+). ATP contacts are provided by Arg91, Arg137, and Arg140. Arg91, Arg137, and Arg140 together coordinate CTP. Residues 228-333 form the HD domain; it reads SGVHTLLVIE…LKVFNALDIW (106 aa).

This sequence belongs to the tRNA nucleotidyltransferase/poly(A) polymerase family. Bacterial CCA-adding enzyme type 1 subfamily. In terms of assembly, monomer. Can also form homodimers and oligomers. Requires Mg(2+) as cofactor. The cofactor is Ni(2+).

It carries out the reaction a tRNA precursor + 2 CTP + ATP = a tRNA with a 3' CCA end + 3 diphosphate. It catalyses the reaction a tRNA with a 3' CCA end + 2 CTP + ATP = a tRNA with a 3' CCACCA end + 3 diphosphate. Its function is as follows. Catalyzes the addition and repair of the essential 3'-terminal CCA sequence in tRNAs without using a nucleic acid template. Adds these three nucleotides in the order of C, C, and A to the tRNA nucleotide-73, using CTP and ATP as substrates and producing inorganic pyrophosphate. tRNA 3'-terminal CCA addition is required both for tRNA processing and repair. Also involved in tRNA surveillance by mediating tandem CCA addition to generate a CCACCA at the 3' terminus of unstable tRNAs. While stable tRNAs receive only 3'-terminal CCA, unstable tRNAs are marked with CCACCA and rapidly degraded. This Actinobacillus pleuropneumoniae serotype 5b (strain L20) protein is Multifunctional CCA protein.